The sequence spans 164 residues: Kunitz-type serine protease inhibitor BbKI (164 aa).

It belongs to the protease inhibitor I3 (leguminous Kunitz-type inhibitor) family. In terms of assembly, monomer.

The protein localises to the secreted. Inhibits bovine trypsin, human plasma kallikrein and plasmin and weakly bovine chymotrypsin. This is Kunitz-type serine protease inhibitor BbKI from Bauhinia bauhinioides (Perlebia bauhinoides).